We begin with the raw amino-acid sequence, 261 residues long: tRNA pseudouridine synthase A (261 aa).

D51 serves as the catalytic Nucleophile. Y109 contacts substrate.

Belongs to the tRNA pseudouridine synthase TruA family. As to quaternary structure, homodimer.

It carries out the reaction uridine(38/39/40) in tRNA = pseudouridine(38/39/40) in tRNA. Formation of pseudouridine at positions 38, 39 and 40 in the anticodon stem and loop of transfer RNAs. The protein is tRNA pseudouridine synthase A of Photobacterium profundum (strain SS9).